A 172-amino-acid chain; its full sequence is uncharacterized protein (172 aa).

The signal sequence occupies residues 1 to 21 (MMKFKKCLLPVAMLASFTLAG). A lipid anchor (N-palmitoyl cysteine) is attached at C22. The S-diacylglycerol cysteine moiety is linked to residue C22.

It is found in the cell membrane. This is an uncharacterized protein from Escherichia coli O157:H7.